A 296-amino-acid polypeptide reads, in one-letter code: Glycine--tRNA ligase alpha subunit (296 aa).

This sequence belongs to the class-II aminoacyl-tRNA synthetase family. In terms of assembly, tetramer of two alpha and two beta subunits.

It is found in the cytoplasm. It carries out the reaction tRNA(Gly) + glycine + ATP = glycyl-tRNA(Gly) + AMP + diphosphate. The chain is Glycine--tRNA ligase alpha subunit from Listeria monocytogenes serotype 4b (strain CLIP80459).